A 343-amino-acid polypeptide reads, in one-letter code: S-adenosylmethionine:tRNA ribosyltransferase-isomerase (343 aa).

It belongs to the QueA family. As to quaternary structure, monomer.

The protein localises to the cytoplasm. It catalyses the reaction 7-aminomethyl-7-carbaguanosine(34) in tRNA + S-adenosyl-L-methionine = epoxyqueuosine(34) in tRNA + adenine + L-methionine + 2 H(+). It participates in tRNA modification; tRNA-queuosine biosynthesis. In terms of biological role, transfers and isomerizes the ribose moiety from AdoMet to the 7-aminomethyl group of 7-deazaguanine (preQ1-tRNA) to give epoxyqueuosine (oQ-tRNA). This chain is S-adenosylmethionine:tRNA ribosyltransferase-isomerase, found in Latilactobacillus sakei subsp. sakei (strain 23K) (Lactobacillus sakei subsp. sakei).